The chain runs to 460 residues: UDP-N-acetylmuramate--L-alanine ligase (460 aa).

An ATP-binding site is contributed by 116 to 122; sequence GSHGKTT.

It belongs to the MurCDEF family.

It localises to the cytoplasm. The catalysed reaction is UDP-N-acetyl-alpha-D-muramate + L-alanine + ATP = UDP-N-acetyl-alpha-D-muramoyl-L-alanine + ADP + phosphate + H(+). Its pathway is cell wall biogenesis; peptidoglycan biosynthesis. Its function is as follows. Cell wall formation. This Caldanaerobacter subterraneus subsp. tengcongensis (strain DSM 15242 / JCM 11007 / NBRC 100824 / MB4) (Thermoanaerobacter tengcongensis) protein is UDP-N-acetylmuramate--L-alanine ligase.